The sequence spans 79 residues: Dolichyl-diphosphooligosaccharide--protein glycosyltransferase subunit TMEM258 (79 aa).

Transmembrane regions (helical) follow at residues 17–37 (VFPH…AWFF) and 55–75 (LISL…LLWV).

It belongs to the OST5 family. In terms of assembly, component of the oligosaccharyltransferase (OST) complex.

The protein localises to the membrane. It is found in the endoplasmic reticulum. It localises to the cytoplasm. It participates in protein modification; protein glycosylation. Its function is as follows. Subunit of the oligosaccharyl transferase (OST) complex that catalyzes the initial transfer of a defined glycan (Glc(3)Man(9)GlcNAc(2) in eukaryotes) from the lipid carrier dolichol-pyrophosphate to an asparagine residue within an Asn-X-Ser/Thr consensus motif in nascent polypeptide chains, the first step in protein N-glycosylation. N-glycosylation occurs cotranslationally and the complex associates with the Sec61 complex at the channel-forming translocon complex that mediates protein translocation across the endoplasmic reticulum (ER). All subunits are required for a maximal enzyme activity. This Gallus gallus (Chicken) protein is Dolichyl-diphosphooligosaccharide--protein glycosyltransferase subunit TMEM258.